We begin with the raw amino-acid sequence, 500 residues long: Probable malate:quinone oxidoreductase (500 aa).

The protein belongs to the MQO family. The cofactor is FAD.

It carries out the reaction (S)-malate + a quinone = a quinol + oxaloacetate. The protein operates within carbohydrate metabolism; tricarboxylic acid cycle; oxaloacetate from (S)-malate (quinone route): step 1/1. The protein is Probable malate:quinone oxidoreductase of Bacillus cereus (strain B4264).